Reading from the N-terminus, the 408-residue chain is uncharacterized protein (408 aa).

Positions 49 to 77 are disordered; sequence PRSSPEVQRKATAGENSEVGSPESSLSTS. Residues 62-77 show a composition bias toward polar residues; that stretch reads GENSEVGSPESSLSTS. Positions 124–170 constitute an F-box domain; sequence SFEFMQLPDTDICQIMSFLDAQSLLNLSQTCSHLRQLCLAHEDNAGK.

This is an uncharacterized protein from Caenorhabditis elegans.